The sequence spans 178 residues: Probable DNA-directed RNA polymerase subunit delta (178 aa).

One can recognise an HTH HARE-type domain in the interval 14 to 81 (KSFIDMAYTL…GENLWGLRDW (68 aa)). The interval 114–178 (LGDDDADEDD…AFEDAEDFND (65 aa)) is disordered. The span at 116–178 (DDDADEDDDI…AFEDAEDFND (63 aa)) shows a compositional bias: acidic residues.

This sequence belongs to the RpoE family. As to quaternary structure, RNAP is composed of a core of 2 alpha, a beta and a beta' subunits. The core is associated with a delta subunit and one of several sigma factors.

In terms of biological role, participates in both the initiation and recycling phases of transcription. In the presence of the delta subunit, RNAP displays an increased specificity of transcription, a decreased affinity for nucleic acids, and an increased efficiency of RNA synthesis because of enhanced recycling. This is Probable DNA-directed RNA polymerase subunit delta from Staphylococcus epidermidis (strain ATCC 35984 / DSM 28319 / BCRC 17069 / CCUG 31568 / BM 3577 / RP62A).